The sequence spans 449 residues: Probable glycine dehydrogenase (decarboxylating) subunit 1 (449 aa).

It belongs to the GcvP family. N-terminal subunit subfamily. The glycine cleavage system is composed of four proteins: P, T, L and H. In this organism, the P 'protein' is a heterodimer of two subunits.

The catalysed reaction is N(6)-[(R)-lipoyl]-L-lysyl-[glycine-cleavage complex H protein] + glycine + H(+) = N(6)-[(R)-S(8)-aminomethyldihydrolipoyl]-L-lysyl-[glycine-cleavage complex H protein] + CO2. The glycine cleavage system catalyzes the degradation of glycine. The P protein binds the alpha-amino group of glycine through its pyridoxal phosphate cofactor; CO(2) is released and the remaining methylamine moiety is then transferred to the lipoamide cofactor of the H protein. This Rhodospirillum centenum (strain ATCC 51521 / SW) protein is Probable glycine dehydrogenase (decarboxylating) subunit 1.